Reading from the N-terminus, the 264-residue chain is uncharacterized protein (264 aa).

The next 3 helical transmembrane spans lie at 48-68 (LTITLLYLHPVSFSAILLLVF), 112-132 (ITPSAISSGLLVSLVLIFLLA), and 142-162 (LPIAIWIGLISLHPKLRSYLI). At S260 the chain carries Phosphoserine.

The protein resides in the membrane. This is an uncharacterized protein from Schizosaccharomyces pombe (strain 972 / ATCC 24843) (Fission yeast).